The chain runs to 142 residues: Hemoglobin subunit alpha-2 (142 aa).

The Globin domain maps to 2–142; it reads VLSAADKSNV…VSTVLTSKYR (141 aa). O2 is bound at residue H59. H88 provides a ligand contact to heme b.

Belongs to the globin family. As to quaternary structure, heterotetramer of two alpha chains and two beta chains.

Functionally, involved in oxygen transport from the lung to the various peripheral tissues. Its function is as follows. Hemopressin acts as an antagonist peptide of the cannabinoid receptor CNR1. Hemopressin-binding efficiently blocks cannabinoid receptor CNR1 and subsequent signaling. This Capra hircus (Goat) protein is Hemoglobin subunit alpha-2 (HBA2).